The sequence spans 179 residues: Large ribosomal subunit protein uL5 (179 aa).

This sequence belongs to the universal ribosomal protein uL5 family. Part of the 50S ribosomal subunit; part of the 5S rRNA/L5/L18/L25 subcomplex. Contacts the 5S rRNA and the P site tRNA. Forms a bridge to the 30S subunit in the 70S ribosome.

Its function is as follows. This is one of the proteins that bind and probably mediate the attachment of the 5S RNA into the large ribosomal subunit, where it forms part of the central protuberance. In the 70S ribosome it contacts protein S13 of the 30S subunit (bridge B1b), connecting the 2 subunits; this bridge is implicated in subunit movement. Contacts the P site tRNA; the 5S rRNA and some of its associated proteins might help stabilize positioning of ribosome-bound tRNAs. This is Large ribosomal subunit protein uL5 from Buchnera aphidicola subsp. Acyrthosiphon pisum (strain APS) (Acyrthosiphon pisum symbiotic bacterium).